The chain runs to 934 residues: Palmitoyltransferase ZDHHC8 (934 aa).

Residues 1-9 are Cytoplasmic-facing; it reads MPKCDVKTR. The chain crosses the membrane as a helical span at residues 10–30; it reads YIPATFAWIVLLLTTFLFFFY. The Extracellular portion of the chain corresponds to 31-47; that stretch reads PCQFYVKSHPWVLAYQG. Residues 48–68 traverse the membrane as a helical segment; it reads VITFFVLANFTLATFMDPGII. Over 69 to 142 the chain is Cytoplasmic; that stretch reads PKASPDEDCE…NNCIGRRNYR (74 aa). The 51-residue stretch at 99–149 folds into the DHHC domain; it reads KWCVTCKFYRPPRCSHCSVCNHCIETFDHHCPWVNNCIGRRNYRFFFFFLV. Residue cysteine 129 is the S-palmitoyl cysteine intermediate of the active site. Residues 143-163 traverse the membrane as a helical segment; that stretch reads FFFFFLVSLSIHMLSIFSLCL. The Extracellular portion of the chain corresponds to 164–177; it reads VYVLKIMPNIKDTA. Residues 178-198 form a helical membrane-spanning segment; that stretch reads PIVAIILMGLVTILAIPIFGL. The Cytoplasmic segment spans residues 199-934; the sequence is TGFHMVLVSR…IYDMNYEISV (736 aa). Disordered regions lie at residues 336 to 440, 506 to 525, 669 to 705, 751 to 780, 835 to 862, and 881 to 934; these read NGYN…GYTS, MASP…RRPD, QRGV…SGIG, QQQQ…TMPQ, PNPM…TPTR, and LEQQ…EISV. Composition is skewed to polar residues over residues 337–349 and 381–394; these read GYNQ…TLYS and RHNS…QVSD. Over residues 397–411 the composition is skewed to gly residues; the sequence is GLNGSVSTGGGGGGD. Over residues 415–429 the composition is skewed to basic residues; the sequence is HMRLYHPRHSPHARP. 2 stretches are compositionally biased toward low complexity: residues 688 to 705 and 751 to 765; these read QQQQ…SGIG and QQQQ…AAAA. A compositionally biased stretch (polar residues) spans 768–780; that stretch reads HRSNPTSPTTMPQ. Residues 910-919 are compositionally biased toward polar residues; that stretch reads MQSNASNSGT.

Belongs to the DHHC palmitoyltransferase family. ERF2/ZDHHC9 subfamily.

It is found in the golgi apparatus membrane. The protein localises to the cell membrane. It carries out the reaction L-cysteinyl-[protein] + hexadecanoyl-CoA = S-hexadecanoyl-L-cysteinyl-[protein] + CoA. Functionally, palmitoyltransferase that catalyzes the addition of palmitate onto various protein substrates and therefore functions in several unrelated biological processes. Regulates tissue growth possibly by regulating Ras64B protein stability. May regulate CG34450 mRNA levels. This Drosophila melanogaster (Fruit fly) protein is Palmitoyltransferase ZDHHC8.